A 304-amino-acid polypeptide reads, in one-letter code: ATP phosphoribosyltransferase (304 aa).

The protein belongs to the ATP phosphoribosyltransferase family. Long subfamily. The cofactor is Mg(2+).

Its subcellular location is the cytoplasm. The catalysed reaction is 1-(5-phospho-beta-D-ribosyl)-ATP + diphosphate = 5-phospho-alpha-D-ribose 1-diphosphate + ATP. Its pathway is amino-acid biosynthesis; L-histidine biosynthesis; L-histidine from 5-phospho-alpha-D-ribose 1-diphosphate: step 1/9. Feedback inhibited by histidine. Catalyzes the condensation of ATP and 5-phosphoribose 1-diphosphate to form N'-(5'-phosphoribosyl)-ATP (PR-ATP). Has a crucial role in the pathway because the rate of histidine biosynthesis seems to be controlled primarily by regulation of HisG enzymatic activity. The protein is ATP phosphoribosyltransferase of Xylella fastidiosa (strain M12).